A 1048-amino-acid chain; its full sequence is Histone deacetylase complex subunit SAP130 (1048 aa).

The interval 1-95 (MGPPRHPQAG…LQSREEKQEP (95 aa)) is disordered. Residues 40–54 (TGLSQAPSQIANSGS) are compositionally biased toward polar residues. Basic and acidic residues predominate over residues 67 to 80 (ESGRDSEVSAREHM). Position 232 is an omega-N-methylarginine (Arg-232). The residue at position 355 (Thr-355) is a Phosphothreonine. Residues Ser-442 and Ser-465 each carry the phosphoserine modification. 3 disordered regions span residues 458-477 (PISGHRASPNPVAMETRSDN), 576-617 (IGTP…PEGK), and 649-687 (QTHSQSASTNAPAQGSSPRPSILRKKPATDGAKPKSEIH). Composition is skewed to polar residues over residues 590–613 (GIHSATPINTQGLQPAPMGTQQPQ) and 649–667 (QTHSQSASTNAPAQGSSPR). Lys-785 is covalently cross-linked (Glycyl lysine isopeptide (Lys-Gly) (interchain with G-Cter in SUMO2)). Positions 819 to 871 (LSMPTSDLPPGASPRKKPRKQQHVISTEEGDMMETNSTDDEKSTAKSLLVKAE) are disordered. The interval 836–1047 (PRKQQHVIST…KVSKLKRKEK (212 aa)) is interactions with SIN3A and HDAC1. Position 855 is a phosphoserine (Ser-855). The residue at position 856 (Thr-856) is a Phosphothreonine. Residues Lys-864 and Lys-869 each participate in a glycyl lysine isopeptide (Lys-Gly) (interchain with G-Cter in SUMO2) cross-link. Ser-875 is subject to Phosphoserine.

Belongs to the SAP130 family. In terms of assembly, component of a mSin3A corepressor complex that contains SIN3A, SAP130, SUDS3/SAP45, ARID4B/SAP180, HDAC1 and HDAC2. Interacts (released by dead or dying cells) with CLEC4E. Post-translationally, acetylated. In terms of processing, sumoylated with SUMO1. Expressed in various cancer cell ines.

The protein localises to the nucleus. Acts as a transcriptional repressor. May function in the assembly and/or enzymatic activity of the mSin3A corepressor complex or in mediating interactions between the complex and other regulatory complexes. The chain is Histone deacetylase complex subunit SAP130 (SAP130) from Homo sapiens (Human).